The following is a 478-amino-acid chain: PRAME family member 11 (478 aa).

The stretch at 99–126 (RWKLQVLDLQDVCENFWMVWSEAMAHGC) is one LRR 1; degenerate repeat. One copy of the LRR 2; degenerate repeat lies at 181–205 (HLCCKKLKILGMPFRNIRSILKMVN). An LRR 3; degenerate repeat occupies 206 to 232 (LDCIQEVEVNCKWILPILTQFTPYLGH). The LRR 4; degenerate repeat unit spans residues 233–268 (LRNLQKLVLSHMDVSRYVSPEQKKEIVTQFTTQFLK). 5 LRR repeats span residues 269-294 (LRCL…LSCL), 295-326 (KTSL…SQLK), 327-347 (TLDL…QILL), 351-378 (AATL…ALSR), and 379-403 (CFEL…LLSH).

It belongs to the PRAME family.

The protein is PRAME family member 11 of Homo sapiens (Human).